Consider the following 76-residue polypeptide: ATP synthase peripheral stalk subunit F6, mitochondrial (76 aa).

3 positions are modified to N6-acetyllysine: K9, K14, and K47. N6-acetyllysine; alternate is present on residues K52 and K67. Residues K52 and K67 each carry the N6-succinyllysine; alternate modification. Residue K73 is modified to N6-acetyllysine. A Phosphoserine modification is found at S76.

Belongs to the eukaryotic ATPase subunit F6 family. Component of the ATP synthase complex composed at least of ATP5F1A/subunit alpha, ATP5F1B/subunit beta, ATP5MC1/subunit c (homooctomer), MT-ATP6/subunit a, MT-ATP8/subunit 8, ATP5ME/subunit e, ATP5MF/subunit f, ATP5MG/subunit g, ATP5MK/subunit k, ATP5MJ/subunit j, ATP5F1C/subunit gamma, ATP5F1D/subunit delta, ATP5F1E/subunit epsilon, ATP5PF/subunit F6, ATP5PB/subunit b, ATP5PD/subunit d, ATP5PO/subunit OSCP. ATP synthase complex consists of a soluble F(1) head domain (subunits alpha(3) and beta(3)) - the catalytic core - and a membrane F(0) domain - the membrane proton channel (subunits c, a, 8, e, f, g, k and j). These two domains are linked by a central stalk (subunits gamma, delta, and epsilon) rotating inside the F1 region and a stationary peripheral stalk (subunits F6, b, d, and OSCP).

It localises to the mitochondrion. Its subcellular location is the mitochondrion inner membrane. Subunit F6, of the mitochondrial membrane ATP synthase complex (F(1)F(0) ATP synthase or Complex V) that produces ATP from ADP in the presence of a proton gradient across the membrane which is generated by electron transport complexes of the respiratory chain. ATP synthase complex consist of a soluble F(1) head domain - the catalytic core - and a membrane F(1) domain - the membrane proton channel. These two domains are linked by a central stalk rotating inside the F(1) region and a stationary peripheral stalk. During catalysis, ATP synthesis in the catalytic domain of F(1) is coupled via a rotary mechanism of the central stalk subunits to proton translocation. In vivo, can only synthesize ATP although its ATP hydrolase activity can be activated artificially in vitro. Part of the complex F(0) domain. Part of the complex F(0) domain and the peripheric stalk, which acts as a stator to hold the catalytic alpha(3)beta(3) subcomplex and subunit a/ATP6 static relative to the rotary elements. This Sus scrofa (Pig) protein is ATP synthase peripheral stalk subunit F6, mitochondrial.